The primary structure comprises 134 residues: UPF0102 protein Dvul_2148 (134 aa).

It belongs to the UPF0102 family.

This Nitratidesulfovibrio vulgaris (strain DP4) (Desulfovibrio vulgaris) protein is UPF0102 protein Dvul_2148.